We begin with the raw amino-acid sequence, 117 residues long: Aspartate 1-decarboxylase (117 aa).

Ser25 (schiff-base intermediate with substrate; via pyruvic acid) is an active-site residue. Position 25 is a pyruvic acid (Ser) (Ser25). Thr57 provides a ligand contact to substrate. Catalysis depends on Tyr58, which acts as the Proton donor. 73 to 75 is a substrate binding site; that stretch reads GAA.

Belongs to the PanD family. Heterooctamer of four alpha and four beta subunits. It depends on pyruvate as a cofactor. In terms of processing, is synthesized initially as an inactive proenzyme, which is activated by self-cleavage at a specific serine bond to produce a beta-subunit with a hydroxyl group at its C-terminus and an alpha-subunit with a pyruvoyl group at its N-terminus.

The protein resides in the cytoplasm. The catalysed reaction is L-aspartate + H(+) = beta-alanine + CO2. Its pathway is cofactor biosynthesis; (R)-pantothenate biosynthesis; beta-alanine from L-aspartate: step 1/1. Its function is as follows. Catalyzes the pyruvoyl-dependent decarboxylation of aspartate to produce beta-alanine. This chain is Aspartate 1-decarboxylase, found in Thermoanaerobacter pseudethanolicus (strain ATCC 33223 / 39E) (Clostridium thermohydrosulfuricum).